The sequence spans 427 residues: 5-hydroxybenzimidazole synthase BzaA (427 aa).

The protein belongs to the ThiC family. 5-hydroxybenzimidazole synthase subfamily. [4Fe-4S] cluster is required as a cofactor.

It carries out the reaction 5-amino-1-(5-phospho-beta-D-ribosyl)imidazole + AH2 + S-adenosyl-L-methionine = 5-hydroxybenzimidazole + 5'-deoxyadenosine + formate + L-methionine + A + NH4(+) + phosphate + 2 H(+). Its pathway is cofactor biosynthesis; adenosylcobalamin biosynthesis. Together with BzaB, catalyzes the conversion of aminoimidazole ribotide (AIR) to 5-hydroxybenzimidazole (5-HBI) in a radical S-adenosyl-L-methionine (SAM)-dependent reaction. Is thus involved in the anaerobic biosynthesis of dimethylbenzimidazole (DMB), the lower axial ligand of vitamin B12 (cobalamin). Requires BzaB for catalytic activity, as BzaA alone displays no activity. The sequence is that of 5-hydroxybenzimidazole synthase BzaA from Eubacterium limosum.